Here is a 200-residue protein sequence, read N- to C-terminus: Putative vacuolar protein sorting-associated protein 24 homolog 2 (200 aa).

Residues 2 to 23 adopt a coiled-coil conformation; the sequence is TIKSLLSDIEREERNVHKAIKD.

Belongs to the SNF7 family. In terms of assembly, component of the endosomal sorting required for transport complex III (ESCRT-III), composed at least of VPS2, VPS20, VPS24 and VPS32.

The protein localises to the endosome. Functionally, component of the ESCRT-III complex, which is required for multivesicular bodies (MVBs) formation and sorting of endosomal cargo proteins into MVBs. The ESCRT-III complex is probably involved in the concentration of MVB cargo. The protein is Putative vacuolar protein sorting-associated protein 24 homolog 2 (VPS24-2) of Arabidopsis thaliana (Mouse-ear cress).